A 1136-amino-acid polypeptide reads, in one-letter code: Tyrosine-protein kinase receptor Tie-1 (1136 aa).

Residues 1-23 (MVWLEPPLLLPIFFLASHVGAAV) form the signal peptide. At 24-757 (DLTLLADLRL…IHAAEEGLDQ (734 aa)) the chain is on the extracellular side. The Ig-like C2-type 1 domain maps to 43-106 (CVSGEAGAGR…PSDLVGVFSC (64 aa)). 2 N-linked (GlcNAc...) asparagine glycosylation sites follow: asparagine 84 and asparagine 159. EGF-like domains are found at residues 212-254 (GCEA…TRCE), 256-301 (ACRE…SQCQ), and 303-343 (ACAP…MHCE). Disulfide bonds link cysteine 226–cysteine 235, cysteine 229–cysteine 242, and cysteine 244–cysteine 253. Disulfide bonds link cysteine 317–cysteine 325, cysteine 319–cysteine 331, and cysteine 333–cysteine 342. In terms of domain architecture, Ig-like C2-type 2 spans 370–424 (CAAAGNPFPVRGSMELRKPDGTVLLSTKAIVEPDRTTAEFEVPRLALGDSGLWEC). 3 consecutive Fibronectin type-III domains span residues 444–543 (PPVP…CPEP), 546–640 (KPWL…LPPS), and 644–737 (APRH…TLGN). N-linked (GlcNAc...) asparagine glycosylation is found at asparagine 501, asparagine 594, and asparagine 707. Residues 758 to 782 (QLVLAVVGSVSATCLTILAALLTLA) form a helical membrane-spanning segment. Topologically, residues 783–1136 (CIRKSCLHRR…AGIDATAEEA (354 aa)) are cytoplasmic. A Protein kinase domain is found at 837–1116 (ITFEDLIGEG…RMLEARKAYV (280 aa)). ATP contacts are provided by residues 843–851 (IGEGNFGQV) and lysine 868. Aspartate 977 serves as the catalytic Proton acceptor. At tyrosine 1005 the chain carries Phosphotyrosine; by autocatalysis.

Belongs to the protein kinase superfamily. Tyr protein kinase family. Tie subfamily. In terms of assembly, heterodimer with TEK/TIE2. Interacts with SVEP1 (via C-terminus). In terms of processing, phosphorylated on tyrosine residues in response to ANGPT1, most likely by TEK/TIE2. In terms of tissue distribution, specifically expressed in developing vascular endothelial cells.

It localises to the cell membrane. It catalyses the reaction L-tyrosyl-[protein] + ATP = O-phospho-L-tyrosyl-[protein] + ADP + H(+). Its function is as follows. Transmembrane tyrosine-protein kinase that may modulate TEK/TIE2 activity and contribute to the regulation of angiogenesis. This is Tyrosine-protein kinase receptor Tie-1 (TIE1) from Bos taurus (Bovine).